The following is a 255-amino-acid chain: 5'-nucleotidase SurE (255 aa).

Residues aspartate 8, aspartate 9, serine 39, and asparagine 91 each contribute to the a divalent metal cation site.

Belongs to the SurE nucleotidase family. It depends on a divalent metal cation as a cofactor.

It is found in the cytoplasm. It catalyses the reaction a ribonucleoside 5'-phosphate + H2O = a ribonucleoside + phosphate. In terms of biological role, nucleotidase that shows phosphatase activity on nucleoside 5'-monophosphates. The polypeptide is 5'-nucleotidase SurE (Acinetobacter baylyi (strain ATCC 33305 / BD413 / ADP1)).